Here is a 207-residue protein sequence, read N- to C-terminus: Outer-membrane lipoprotein LolB (207 aa).

Residues M1–A21 form the signal peptide. A lipid anchor (N-palmitoyl cysteine) is attached at C22. C22 carries the S-diacylglycerol cysteine lipid modification.

The protein belongs to the LolB family. Monomer.

It localises to the cell outer membrane. Functionally, plays a critical role in the incorporation of lipoproteins in the outer membrane after they are released by the LolA protein. The polypeptide is Outer-membrane lipoprotein LolB (Salmonella agona (strain SL483)).